The primary structure comprises 927 residues: Isoleucine--tRNA ligase (927 aa).

The 'HIGH' region signature appears at 57-67 (PFANGNIHMGH). Glu553 provides a ligand contact to L-isoleucyl-5'-AMP. A 'KMSKS' region motif is present at residues 594 to 598 (KMSKS). Residue Lys597 participates in ATP binding. Zn(2+) is bound by residues Cys886, Cys889, Cys906, and Cys909.

The protein belongs to the class-I aminoacyl-tRNA synthetase family. IleS type 1 subfamily. As to quaternary structure, monomer. Requires Zn(2+) as cofactor.

It is found in the cytoplasm. The catalysed reaction is tRNA(Ile) + L-isoleucine + ATP = L-isoleucyl-tRNA(Ile) + AMP + diphosphate. Catalyzes the attachment of isoleucine to tRNA(Ile). As IleRS can inadvertently accommodate and process structurally similar amino acids such as valine, to avoid such errors it has two additional distinct tRNA(Ile)-dependent editing activities. One activity is designated as 'pretransfer' editing and involves the hydrolysis of activated Val-AMP. The other activity is designated 'posttransfer' editing and involves deacylation of mischarged Val-tRNA(Ile). The sequence is that of Isoleucine--tRNA ligase from Lactobacillus acidophilus (strain ATCC 700396 / NCK56 / N2 / NCFM).